Here is a 505-residue protein sequence, read N- to C-terminus: ATP synthase subunit alpha (505 aa).

171–178 is an ATP binding site; that stretch reads GDRQTGKT.

Belongs to the ATPase alpha/beta chains family. In terms of assembly, F-type ATPases have 2 components, CF(1) - the catalytic core - and CF(0) - the membrane proton channel. CF(1) has five subunits: alpha(3), beta(3), gamma(1), delta(1), epsilon(1). CF(0) has three main subunits: a(1), b(2) and c(9-12). The alpha and beta chains form an alternating ring which encloses part of the gamma chain. CF(1) is attached to CF(0) by a central stalk formed by the gamma and epsilon chains, while a peripheral stalk is formed by the delta and b chains.

Its subcellular location is the cell inner membrane. The catalysed reaction is ATP + H2O + 4 H(+)(in) = ADP + phosphate + 5 H(+)(out). Its function is as follows. Produces ATP from ADP in the presence of a proton gradient across the membrane. The alpha chain is a regulatory subunit. This chain is ATP synthase subunit alpha, found in Campylobacter concisus (strain 13826).